Consider the following 688-residue polypeptide: Protein sel-1 homolog 2 (688 aa).

The signal sequence occupies residues 1 to 23 (MKPLSLLIEILIILGVTIKTIKA). Topologically, residues 24 to 662 (EEHNKRQKER…RWNWLKLDNT (639 aa)) are extracellular. Residue asparagine 34 is glycosylated (N-linked (GlcNAc...) asparagine). Sel1-like repeat units lie at residues 107–142 (GDQL…DMGN), 143–178 (LKAM…KEGS), 179–214 (CKAQ…AGGN), 215–250 (MMSQ…DYIA), 297–333 (VQIQ…KAGS), 334–370 (ANAM…SKGN), 371–406 (AIGL…EKGW), 407–442 (PDAQ…QSGQ), 443–478 (PLAI…ELGH), 551–586 (AFAR…NKYH), and 588–623 (AQAM…QTSP). Residues 663–683 (IGPHWDLFVIGLIVPGLILLL) traverse the membrane as a helical segment. Topologically, residues 684-688 (RNHHG) are cytoplasmic.

The protein belongs to the sel-1 family.

Its subcellular location is the membrane. It localises to the cell projection. It is found in the cilium. The protein resides in the nucleus speckle. The polypeptide is Protein sel-1 homolog 2 (SEL1L2) (Homo sapiens (Human)).